A 234-amino-acid polypeptide reads, in one-letter code: Phosphoribosylaminoimidazole-succinocarboxamide synthase (234 aa).

It belongs to the SAICAR synthetase family.

The enzyme catalyses 5-amino-1-(5-phospho-D-ribosyl)imidazole-4-carboxylate + L-aspartate + ATP = (2S)-2-[5-amino-1-(5-phospho-beta-D-ribosyl)imidazole-4-carboxamido]succinate + ADP + phosphate + 2 H(+). Its pathway is purine metabolism; IMP biosynthesis via de novo pathway; 5-amino-1-(5-phospho-D-ribosyl)imidazole-4-carboxamide from 5-amino-1-(5-phospho-D-ribosyl)imidazole-4-carboxylate: step 1/2. The sequence is that of Phosphoribosylaminoimidazole-succinocarboxamide synthase from Streptococcus pyogenes serotype M18 (strain MGAS8232).